The primary structure comprises 64 residues: Long neurotoxin MS4 (64 aa).

5 disulfides stabilise this stretch: cysteine 3-cysteine 24, cysteine 6-cysteine 11, cysteine 17-cysteine 41, cysteine 45-cysteine 57, and cysteine 58-cysteine 63.

Belongs to the three-finger toxin family. Ancestral subfamily. Expressed by the venom gland.

The protein localises to the secreted. Functionally, produces peripheral paralysis by blocking neuromuscular transmission at the postsynaptic site. Weak inhibitor of the endogenous nicotinic acetylcholine receptors (nAChR) in the human rhabdomyosarcoma TE 671 cell line with an IC(50) of 690 mM. This neurotoxin is lethal to zebrafish by injection at the back of the dorsolateral region, but is not toxic to mice by intraperitoneal injection. The polypeptide is Long neurotoxin MS4 (Micrurus surinamensis (Surinam coral snake)).